The following is a 314-amino-acid chain: tRNA pseudouridine synthase B (314 aa).

Catalysis depends on Asp-47, which acts as the Nucleophile.

This sequence belongs to the pseudouridine synthase TruB family. Type 1 subfamily.

The enzyme catalyses uridine(55) in tRNA = pseudouridine(55) in tRNA. Its function is as follows. Responsible for synthesis of pseudouridine from uracil-55 in the psi GC loop of transfer RNAs. This Vibrio parahaemolyticus serotype O3:K6 (strain RIMD 2210633) protein is tRNA pseudouridine synthase B.